The chain runs to 342 residues: tRNA-specific 2-thiouridylase MnmA (342 aa).

Residues 6–13 and Leu32 contribute to the ATP site; that span reads LLSGGVDS. Cys92 acts as the Nucleophile in catalysis. An intrachain disulfide couples Cys92 to Cys191. Gly116 is a binding site for ATP. The interval 138 to 140 is interaction with tRNA; the sequence is KDQ. Cys191 (cysteine persulfide intermediate) is an active-site residue. Residues 293-294 form an interaction with tRNA region; sequence RY.

Belongs to the MnmA/TRMU family.

It is found in the cytoplasm. The catalysed reaction is S-sulfanyl-L-cysteinyl-[protein] + uridine(34) in tRNA + AH2 + ATP = 2-thiouridine(34) in tRNA + L-cysteinyl-[protein] + A + AMP + diphosphate + H(+). Functionally, catalyzes the 2-thiolation of uridine at the wobble position (U34) of tRNA, leading to the formation of s(2)U34. This chain is tRNA-specific 2-thiouridylase MnmA, found in Helicobacter pylori (strain HPAG1).